A 341-amino-acid chain; its full sequence is Heme A synthase (341 aa).

Helical transmembrane passes span Val-8–Ile-28, Phe-92–Leu-112, Ile-126–Gly-146, Leu-160–Ile-180, Ala-201–Ile-221, Val-256–Phe-276, Leu-294–Pro-314, and Leu-315–Thr-335. Heme is bound at residue His-260. Residue His-321 participates in heme binding.

It belongs to the COX15/CtaA family. Type 2 subfamily. Interacts with CtaB. Heme b is required as a cofactor.

It is found in the cell membrane. The catalysed reaction is Fe(II)-heme o + 2 A + H2O = Fe(II)-heme a + 2 AH2. It functions in the pathway porphyrin-containing compound metabolism; heme A biosynthesis; heme A from heme O: step 1/1. Its function is as follows. Catalyzes the conversion of heme O to heme A by two successive hydroxylations of the methyl group at C8. The first hydroxylation forms heme I, the second hydroxylation results in an unstable dihydroxymethyl group, which spontaneously dehydrates, resulting in the formyl group of heme A. The chain is Heme A synthase from Flavobacterium johnsoniae (strain ATCC 17061 / DSM 2064 / JCM 8514 / BCRC 14874 / CCUG 350202 / NBRC 14942 / NCIMB 11054 / UW101) (Cytophaga johnsonae).